The sequence spans 101 residues: Putative defensin-like protein 86 (101 aa).

Positions 1 to 27 are cleaved as a signal peptide; that stretch reads MAITKMSSLIILSLMMLTFIYIPMISG. 4 disulfide bridges follow: Cys35–Cys71, Cys39–Cys59, Cys45–Cys69, and Cys49–Cys70.

Belongs to the DEFL family.

It localises to the secreted. The chain is Putative defensin-like protein 86 (LCR82) from Arabidopsis thaliana (Mouse-ear cress).